Consider the following 1082-residue polypeptide: DNA-directed RNA polymerase subunit beta (1082 aa).

This sequence belongs to the RNA polymerase beta chain family. In terms of assembly, in plastids the minimal PEP RNA polymerase catalytic core is composed of four subunits: alpha, beta, beta', and beta''. When a (nuclear-encoded) sigma factor is associated with the core the holoenzyme is formed, which can initiate transcription.

It localises to the plastid. The protein resides in the chloroplast. The catalysed reaction is RNA(n) + a ribonucleoside 5'-triphosphate = RNA(n+1) + diphosphate. DNA-dependent RNA polymerase catalyzes the transcription of DNA into RNA using the four ribonucleoside triphosphates as substrates. This chain is DNA-directed RNA polymerase subunit beta, found in Euglena gracilis.